We begin with the raw amino-acid sequence, 240 residues long: Adenylate dimethylallyltransferase (240 aa).

The protein belongs to the isopentenyl transferase family.

It carries out the reaction dimethylallyl diphosphate + AMP = N(6)-(dimethylallyl)adenosine 5'-phosphate + diphosphate. Functionally, transfers dimethylallyl groups to AMP as part of the biosynthesis of cytokinin phytohormones. The chain is Adenylate dimethylallyltransferase (izt) from Agrobacterium tumefaciens (strain Ach5).